A 108-amino-acid chain; its full sequence is Heme oxygenase (staphylobilin-producing) (108 aa).

The region spanning 2–93 (FMAENRLQLQ…DDDGQQSPIL (92 aa)) is the ABM domain. A Fe cation-binding site is contributed by N6. Heme contacts are provided by residues 21–28 (RFYNRQGI) and H76.

It belongs to the antibiotic biosynthesis monooxygenase family. Heme-degrading monooxygenase IsdG subfamily. Homodimer.

The protein resides in the cytoplasm. The enzyme catalyses heme b + 5 AH2 + 4 O2 + 2 H(+) = delta-staphylobilin + Fe(2+) + formaldehyde + 5 A + 4 H2O. It catalyses the reaction heme b + 5 AH2 + 4 O2 + 2 H(+) = beta-staphylobilin + Fe(2+) + formaldehyde + 5 A + 4 H2O. Functionally, allows bacterial pathogens to use the host heme as an iron source. Catalyzes the oxidative degradation of the heme macrocyclic porphyrin ring to the oxo-bilirubin chromophore staphylobilin (a mixture of the linear tetrapyrroles 5-oxo-delta-bilirubin and 15-oxo-beta-bilirubin) in the presence of a suitable electron donor such as ascorbate or NADPH--cytochrome P450 reductase, with subsequent release of free iron. This Staphylococcus aureus (strain Mu3 / ATCC 700698) protein is Heme oxygenase (staphylobilin-producing) (isdI).